The following is a 246-amino-acid chain: Protein crossbronx (246 aa).

Residues 20–177 (QQEYKILAEY…VQESILESKA (158 aa)) enclose the UBC core domain.

Belongs to the ubiquitin-conjugating enzyme family. FTS subfamily.

This Drosophila grimshawi (Hawaiian fruit fly) protein is Protein crossbronx (cbx).